We begin with the raw amino-acid sequence, 199 residues long: MARCKS-related protein (199 aa).

Residues 1 to 199 (MGSQSSKAPR…PTPAGAEQNE (199 aa)) form a disordered region. The N-myristoyl glycine moiety is linked to residue Gly2. The residue at position 14 (Thr14) is a Phosphothreonine. Residues 16–26 (EEAAGASPAKA) show a composition bias toward low complexity. Phosphoserine occurs at positions 22, 36, and 48. A compositionally biased stretch (low complexity) spans 53-64 (GTDEAAGATGDA). Residue Ser71 is modified to Phosphoserine. A compositionally biased stretch (basic and acidic residues) spans 76-85 (AKGDAPPKET). At Thr85 the chain carries Phosphothreonine. Over residues 86 to 98 (PKKKKKFSFKKPF) the composition is skewed to basic residues. The interval 87–110 (KKKKKFSFKKPFKLSGLSFKRNRK) is effector domain involved in lipid-binding and calmodulin-binding. Phosphoserine; by PKC occurs at positions 93, 101, and 104. Ser119 is modified (phosphoserine). Ser120 carries the phosphoserine; by MAPK8 modification. Ser135 is subject to Phosphoserine. Thr148 carries the post-translational modification Phosphothreonine; by MAPK8. Residue Ser151 is modified to Phosphoserine. Low complexity predominate over residues 156 to 167 (AKGAEAGAACKG). Thr170 bears the Phosphothreonine mark. A compositionally biased stretch (low complexity) spans 181–199 (STPSGPESGPTPAGAEQNE). At Thr182 the chain carries Phosphothreonine; by MAPK8. Thr191 bears the Phosphothreonine mark.

It belongs to the MARCKS family. Binds to filamentous actin (F-actin), but not to monomeric G-actin, independently of its phosphorylation status. Interacts with calmodulin. Phosphorylated. Phosphorylation at Ser-120 and Thr-182 is non-redundantly catalyzed by MAPK8 in vivo. Phosphorylation at Thr-148 is preferentially catalyzed by MAPK8 in vivo, but this modification can also be catalyzed by other kinases in the absence of MAPK8. May be phosphorylated by protein kinase C, which disrupts the interaction with calmodulin.

It localises to the cytoplasm. The protein resides in the cytoskeleton. The protein localises to the cell membrane. Functionally, controls cell movement by regulating actin cytoskeleton homeostasis and filopodium and lamellipodium formation. When unphosphorylated, induces cell migration. When phosphorylated by MAPK8, induces actin bundles formation and stabilization, thereby reducing actin plasticity, hence restricting cell movement, including neuronal migration. May be involved in coupling the protein kinase C and calmodulin signal transduction systems. In Oryctolagus cuniculus (Rabbit), this protein is MARCKS-related protein (MARCKSL1).